The following is a 212-amino-acid chain: Pyrrolidone-carboxylate peptidase (212 aa).

Active-site residues include glutamate 78, cysteine 141, and histidine 165.

It belongs to the peptidase C15 family. Homotetramer.

It localises to the cytoplasm. It catalyses the reaction Release of an N-terminal pyroglutamyl group from a polypeptide, the second amino acid generally not being Pro.. Functionally, removes 5-oxoproline from various penultimate amino acid residues except L-proline. This is Pyrrolidone-carboxylate peptidase from Staphylococcus aureus (strain bovine RF122 / ET3-1).